Reading from the N-terminus, the 162-residue chain is NADH-quinone oxidoreductase subunit I (162 aa).

4Fe-4S ferredoxin-type domains lie at 53–83 (LRRY…IESE) and 93–122 (TRYD…EGPN). Residues cysteine 63, cysteine 66, cysteine 69, cysteine 73, cysteine 102, cysteine 105, cysteine 108, and cysteine 112 each contribute to the [4Fe-4S] cluster site.

Belongs to the complex I 23 kDa subunit family. As to quaternary structure, NDH-1 is composed of 14 different subunits. Subunits NuoA, H, J, K, L, M, N constitute the membrane sector of the complex. The cofactor is [4Fe-4S] cluster.

The protein resides in the cell inner membrane. It carries out the reaction a quinone + NADH + 5 H(+)(in) = a quinol + NAD(+) + 4 H(+)(out). In terms of biological role, NDH-1 shuttles electrons from NADH, via FMN and iron-sulfur (Fe-S) centers, to quinones in the respiratory chain. The immediate electron acceptor for the enzyme in this species is believed to be ubiquinone. Couples the redox reaction to proton translocation (for every two electrons transferred, four hydrogen ions are translocated across the cytoplasmic membrane), and thus conserves the redox energy in a proton gradient. This is NADH-quinone oxidoreductase subunit I from Erythrobacter litoralis (strain HTCC2594).